The following is a 327-amino-acid chain: Phenylalanine--tRNA ligase alpha subunit (327 aa).

A Mg(2+)-binding site is contributed by Glu-252.

The protein belongs to the class-II aminoacyl-tRNA synthetase family. Phe-tRNA synthetase alpha subunit type 1 subfamily. As to quaternary structure, tetramer of two alpha and two beta subunits. Requires Mg(2+) as cofactor.

The protein localises to the cytoplasm. It carries out the reaction tRNA(Phe) + L-phenylalanine + ATP = L-phenylalanyl-tRNA(Phe) + AMP + diphosphate + H(+). In Salmonella choleraesuis (strain SC-B67), this protein is Phenylalanine--tRNA ligase alpha subunit.